The sequence spans 542 residues: MKFSILSLAVAGLVGLAKASVSPVHVDGRYFFYENGTRFFLKGIAYQPNVDDSDTEGTLFVDPLSDGDACSRDVPYFQELSVNAIRVYAVNASLDHSACMQAFQDAGIYVLSDLAQPYEAISSSDPTWTVDLFSRYTEVVDSLAPYDNMLGFIAGNEVIQNNTNTNAAAFVKAAVRDVKSYIKSSGYRQIPVGYSTNDEEVTRDPMAYYFDCGDDDDHVDFYGINIYEWCGDSDFVSSGYQERTEEFSNMTVPMIFSEFGCIEVRPRTFSEIVALFSDNMTDVWSGGIAYQYFESENEYGVVTVSGDSVSTLTDFPYLSSRYASVIPSASYESTMSATLTATMSCQATNSAWMAATSLPPTPSEAVCECMDSTRSCVINDDVSSDDYSDLFSYVCNEISCDGITANGTYPGQYGSYSYCDAKQQLDYVLDAYYSAKGDCDFSGSATLVSASSATGTCASYLSAAGSSATNAISLTADSNAVSRNSSASTMSTSYTSGSGSSNSSGSSSNSSSKSSSGASSYNLNMVITFLSVVIGGTAVLFI.

Positions 1-19 are cleaved as a signal peptide; the sequence is MKFSILSLAVAGLVGLAKA. The N-linked (GlcNAc...) asparagine glycan is linked to asparagine 35. A disulfide bond links cysteine 70 and cysteine 99. Position 88 (tyrosine 88) interacts with (1,3-beta-D-glucosyl)n. Asparagine 91 carries N-linked (GlcNAc...) asparagine glycosylation. (1,3-beta-D-glucosyl)n-binding residues include asparagine 156 and glutamate 157. The active-site Proton donor is glutamate 157. N-linked (GlcNAc...) asparagine glycosylation is present at asparagine 161. 2 residues coordinate (1,3-beta-D-glucosyl)n: aspartate 198 and arginine 203. Cystine bridges form between cysteine 212–cysteine 345, cysteine 230–cysteine 261, cysteine 367–cysteine 419, cysteine 376–cysteine 439, and cysteine 395–cysteine 400. An N-linked (GlcNAc...) asparagine glycan is attached at asparagine 249. The active-site Nucleophile is the glutamate 258. An N-linked (GlcNAc...) asparagine glycan is attached at asparagine 279. Tyrosine 290 lines the (1,3-beta-D-glucosyl)n pocket. N-linked (GlcNAc...) asparagine glycans are attached at residues asparagine 406, asparagine 484, asparagine 502, and asparagine 509. Positions 490-515 are disordered; that stretch reads MSTSYTSGSGSSNSSGSSSNSSSKSS. Serine 516 carries the GPI-anchor amidated serine lipid modification. Residues 517–542 constitute a propeptide, removed in mature form; it reads GASSYNLNMVITFLSVVIGGTAVLFI.

The protein belongs to the glycosyl hydrolase 72 family. In terms of processing, the GPI-anchor is attached to the protein in the endoplasmic reticulum and serves to target the protein to the cell surface. There, the glucosamine-inositol phospholipid moiety is cleaved off and the GPI-modified mannoprotein is covalently attached via its lipidless GPI glycan remnant to the 1,6-beta-glucan of the outer cell wall layer.

The protein resides in the secreted. It localises to the cell wall. Its subcellular location is the membrane. Functionally, splits internally a 1,3-beta-glucan molecule and transfers the newly generated reducing end (the donor) to the non-reducing end of another 1,3-beta-glucan molecule (the acceptor) forming a 1,3-beta linkage, resulting in the elongation of 1,3-beta-glucan chains in the cell wall. The protein is 1,3-beta-glucanosyltransferase gas1 (gas1) of Schizosaccharomyces pombe (strain 972 / ATCC 24843) (Fission yeast).